The sequence spans 331 residues: MVSRNSDGYFLDPTGMTVPGLGPSFTAAVSSSSSPTTSSTAVAVADVTAMVSSSEEDLSKKIRKPYTITKSRESWTEPEHDKFLEALQLFDRDWKKIEAFIGSKTVIQIRSHAQKYFLKVQKSGTGEHLPPPRPKRKAAHPYPQKAHKNVQLQVPGSFKSTSEPNDPSFMFRPESSSMLMTSPTTAAAAPWTNNAQTISFTPLPKAGAGANNNCSSSSENTPRPRSNRDARDHGNVGHSLRVLPDFAQVYGFIGSVFDPYASNHLQKLKKMDPIDVETVLLLMRNLSINLSSPDFEDHRRLLSSYDIGSETATDHGGVNKTLNKDPPEIST.

The 55-residue stretch at 67–121 (TITKSRESWTEPEHDKFLEALQLFDRDWKKIEAFIGSKTVIQIRSHAQKYFLKVQ) folds into the HTH myb-type domain. Residues 94–117 (WKKIEAFIGSKTVIQIRSHAQKYF) constitute a DNA-binding region (H-T-H motif). Disordered regions lie at residues 122–166 (KSGT…EPND), 203–237 (LPKAGAGANNNCSSSSENTPRPRSNRDARDHGNVG), and 309–331 (SETATDHGGVNKTLNKDPPEIST). Positions 150-165 (VQLQVPGSFKSTSEPN) are enriched in polar residues. The segment covering 211-220 (NNNCSSSSEN) has biased composition (low complexity). 2 stretches are compositionally biased toward basic and acidic residues: residues 226-235 (SNRDARDHGN) and 322-331 (LNKDPPEIST).

It is found in the nucleus. Probable transcription factor. RVE4, RVE6 and RVE8 are components of the circadian system acting synergistically to regulate flowering time, redundantly to regulate leaf growth, and antagonistically to regulate hypocotyl elongation; their action seems independent of ZTL and HY5. The polypeptide is Protein REVEILLE 6 (Arabidopsis thaliana (Mouse-ear cress)).